Reading from the N-terminus, the 332-residue chain is Nuclear migration protein nudC (332 aa).

Residues 122 to 161 (RQQLLDSAGGEPSASNRDGISKPIEKVDDESDKSELGKLM) are disordered. Positions 168-259 (CTLENYTWTQ…NKMNWWSRLV (92 aa)) constitute a CS domain.

Belongs to the nudC family. As to quaternary structure, interacts with PCID2.

The protein resides in the cytoplasm. Functionally, chaperone protein with functions in nuclear localization and cytoplasmic mRNA trafficking. In postmitotic neurons, acts with nudE downstream of dar1 to ensure correct positioning of the nuclei in primary dendrites and as a consequence, is required for determining multipolar neuron morphology. Stabilizes PCID2 in the cytoplasm and thereby is required for promoting cytoplasmic mRNA trafficking. The chain is Nuclear migration protein nudC from Drosophila melanogaster (Fruit fly).